Reading from the N-terminus, the 292-residue chain is Glutamate racemase (292 aa).

Substrate-binding positions include 28 to 29 and 60 to 61; these read DS and YG. C91 acts as the Proton donor/acceptor in catalysis. 92-93 is a substrate binding site; it reads NT. The Proton donor/acceptor role is filled by C200. Substrate is bound at residue 201–202; it reads TH.

It belongs to the aspartate/glutamate racemases family.

The catalysed reaction is L-glutamate = D-glutamate. It participates in cell wall biogenesis; peptidoglycan biosynthesis. In terms of biological role, provides the (R)-glutamate required for cell wall biosynthesis. The chain is Glutamate racemase from Trichormus variabilis (strain ATCC 29413 / PCC 7937) (Anabaena variabilis).